The primary structure comprises 321 residues: Histidine N-alpha-methyltransferase (321 aa).

Tyr56 lines the L-histidine pocket. S-adenosyl-L-methionine contacts are provided by residues Gly86, Lys92, Asp113, and 141–142 (DF). L-histidine contacts are provided by residues Asn166, Tyr206, and 282–284 (EVS).

This sequence belongs to the methyltransferase superfamily. EgtD family. In terms of assembly, monomer.

It catalyses the reaction L-histidine + 3 S-adenosyl-L-methionine = hercynine + 3 S-adenosyl-L-homocysteine + 3 H(+). It participates in amino-acid biosynthesis; ergothioneine biosynthesis. Its function is as follows. Catalyzes the SAM-dependent triple methylation of the alpha-amino group of histidine to form hercynine, a step in the biosynthesis pathway of ergothioneine. Among all the proteinogenic amino acids, only L-histidine is a substrate. This is Histidine N-alpha-methyltransferase from Mycolicibacterium smegmatis (strain ATCC 700084 / mc(2)155) (Mycobacterium smegmatis).